Here is a 913-residue protein sequence, read N- to C-terminus: Protein SEY1 homolog (913 aa).

The Cytoplasmic segment spans residues 1–825 (MANASKTQII…ETGGQMSLKN (825 aa)). The region spanning 33–288 (GFNYNVIAIL…IPADGFAQYC (256 aa)) is the GB1/RHD3-type G domain. GTP is bound at residue 43–50 (GSQSSGKS). Disordered stretches follow at residues 89-108 (AGGS…GDKP) and 436-455 (TEQD…AKKG). Coiled-coil stretches lie at residues 636–659 (DDEN…MESL) and 703–727 (IEII…VIIN). A helical transmembrane segment spans residues 826–846 (VPFAFWVILLILGWNEILMFT). Residues 847–849 (RLF) lie on the Lumenal side of the membrane. Residues 850-870 (FRLNIILPMFMAFIIIVGSCL) form a helical membrane-spanning segment. Residues 871–913 (YTGNAQVLSYLNKIAFIVIKHSYNFYKHLQTVGNQPTKPEKVD) are Cytoplasmic-facing.

The protein belongs to the TRAFAC class dynamin-like GTPase superfamily. GB1/RHD3 GTPase family. RHD3 subfamily.

The protein localises to the endoplasmic reticulum membrane. In terms of biological role, probable GTP-binding protein involved in generating and maintaining the structure of the tubular endoplasmic reticulum network. The sequence is that of Protein SEY1 homolog from Plasmodium chabaudi chabaudi.